A 452-amino-acid chain; its full sequence is Probable ECA polymerase (452 aa).

11 helical membrane-spanning segments follow: residues 6–26, 37–57, 63–83, 118–138, 155–175, 181–201, 207–227, 228–248, 341–361, 378–398, and 410–430; these read FSGL…LTWF, VFFS…TSVL, VGVA…CFYG, VILM…NGFL, GVAL…VYFL, AWLF…MIVG, IIIA…ISLW, MLAA…LKRY, LVVM…GLII, YKAA…IVLA, and VFFL…FWLF.

The protein belongs to the WzyE family. Probably part of a complex composed of WzxE, WzyE and WzzE.

The protein localises to the cell inner membrane. The protein operates within bacterial outer membrane biogenesis; enterobacterial common antigen biosynthesis. Functionally, probably involved in the polymerization of enterobacterial common antigen (ECA) trisaccharide repeat units. This chain is Probable ECA polymerase, found in Salmonella choleraesuis (strain SC-B67).